Here is a 754-residue protein sequence, read N- to C-terminus: 5-methyltetrahydropteroyltriglutamate--homocysteine methyltransferase (754 aa).

5-methyltetrahydropteroyltri-L-glutamate-binding positions include 17–20 (RELK) and K117. L-homocysteine-binding positions include 431–433 (IGS) and E484. L-methionine-binding positions include 431-433 (IGS) and E484. 5-methyltetrahydropteroyltri-L-glutamate is bound by residues 515–516 (RC) and W561. Residue D599 participates in L-homocysteine binding. D599 provides a ligand contact to L-methionine. E605 lines the 5-methyltetrahydropteroyltri-L-glutamate pocket. Zn(2+) is bound by residues H641, C643, and E665. The active-site Proton donor is H694. C726 serves as a coordination point for Zn(2+).

This sequence belongs to the vitamin-B12 independent methionine synthase family. Zn(2+) serves as cofactor.

It carries out the reaction 5-methyltetrahydropteroyltri-L-glutamate + L-homocysteine = tetrahydropteroyltri-L-glutamate + L-methionine. The protein operates within amino-acid biosynthesis; L-methionine biosynthesis via de novo pathway; L-methionine from L-homocysteine (MetE route): step 1/1. In terms of biological role, catalyzes the transfer of a methyl group from 5-methyltetrahydrofolate to homocysteine resulting in methionine formation. The sequence is that of 5-methyltetrahydropteroyltriglutamate--homocysteine methyltransferase from Salmonella arizonae (strain ATCC BAA-731 / CDC346-86 / RSK2980).